The following is a 397-amino-acid chain: NADH-quinone oxidoreductase subunit H (397 aa).

A run of 9 helical transmembrane segments spans residues Ala7–Ala27, Leu78–Ile98, Ile120–Ala140, Met164–Val184, Trp195–Val215, Met247–Gly267, Ser283–Val303, Leu322–Pro342, and Trp353–Val373.

This sequence belongs to the complex I subunit 1 family. NDH-1 is composed of 15 different subunits. Subunits NuoA, H, J, K, L, M, N constitute the membrane sector of the complex.

Its subcellular location is the cell membrane. It carries out the reaction a quinone + NADH + 5 H(+)(in) = a quinol + NAD(+) + 4 H(+)(out). Its function is as follows. NDH-1 shuttles electrons from NADH, via FMN and iron-sulfur (Fe-S) centers, to quinones in the respiratory chain. The immediate electron acceptor for the enzyme in this species is believed to be ubiquinone. Couples the redox reaction to proton translocation (for every two electrons transferred, four hydrogen ions are translocated across the cytoplasmic membrane), and thus conserves the redox energy in a proton gradient. This subunit may bind ubiquinone. This chain is NADH-quinone oxidoreductase subunit H, found in Deinococcus radiodurans (strain ATCC 13939 / DSM 20539 / JCM 16871 / CCUG 27074 / LMG 4051 / NBRC 15346 / NCIMB 9279 / VKM B-1422 / R1).